The primary structure comprises 542 residues: MNSSLQVGIGIDVGSSSARIGVYNYYNDALLEMAQEPVPYYQDSSKKSWKFWQKSTEIIKALQKCLQKLNIREYEVKSCGVSATCSLAIFERDRTSNMLIPYPNEDNVIFWMDSSAVNECQWLNMQCPQQLLDYLGGKFVPEMGVPKLKYFLDEYSHLRDKHFHIFDLHQYIAYELSRLYEWNIEGLLGRENLNGIGNDGEVSGWSSSFYKNIINLPSNVSIGTTSLVANKHISTTVVRSCIDSYASWFAVASPHLETSLFMIAGTSSCYMYGTTISDTRIPGVWGPFDTILDNRGDFSVYAAGQSCTGKLIEHLFESHPCARKILKDGADIYQVLEQTIRDIEKNNGLSIHILTKDMFFYGDYEGNRTPFADPRIKGSFIGESTDTSMLNLTYKYICILEFLSFQTKLIIDTFQNENSNIHIKELRISGSQAKNERLLSLISLVNNGVAIIKPKENVDMMGIKGAYVLAKSAKEKKQLADVITERDISNDSEKFESLAEYRLGNDSILLRKLLCVKYHIHLDMAKQQKRYHKLVDEVFQHL.

The polypeptide is Protein MPA43 (MPA43) (Saccharomyces cerevisiae (strain ATCC 204508 / S288c) (Baker's yeast)).